The primary structure comprises 195 residues: Cytochrome c biogenesis ATP-binding export protein CcmA (195 aa).

In terms of domain architecture, ABC transporter spans 1–195 (MLSLHQLQFN…IKSAQILQLV (195 aa)). 33–40 (GANGSGKS) contacts ATP.

This sequence belongs to the ABC transporter superfamily. CcmA exporter (TC 3.A.1.107) family. The complex is composed of two ATP-binding proteins (CcmA) and two transmembrane proteins (CcmB).

The protein localises to the cell inner membrane. It carries out the reaction heme b(in) + ATP + H2O = heme b(out) + ADP + phosphate + H(+). Functionally, part of the ABC transporter complex CcmAB involved in the biogenesis of c-type cytochromes; once thought to export heme, this seems not to be the case, but its exact role is uncertain. Responsible for energy coupling to the transport system. The chain is Cytochrome c biogenesis ATP-binding export protein CcmA from Rickettsia felis (strain ATCC VR-1525 / URRWXCal2) (Rickettsia azadi).